The sequence spans 749 residues: Catalase-peroxidase 2 (749 aa).

Residues 1–27 (MFKRTIPLFAAFTLAISPSIFPNYAHA) form the signal peptide. The segment at residues 107–229 (WHAAGTYRIY…LAATVMGLIY (123 aa)) is a cross-link (tryptophyl-tyrosyl-methioninium (Trp-Tyr) (with M-255)). His-108 serves as the catalytic Proton acceptor. The segment at residues 229-255 (YVNPEGPNGVPDPLAAAEKIRETFGRM) is a cross-link (tryptophyl-tyrosyl-methioninium (Tyr-Met) (with W-107)). His-270 is a binding site for heme b.

It belongs to the peroxidase family. Peroxidase/catalase subfamily. As to quaternary structure, homodimer or homotetramer. It depends on heme b as a cofactor. Formation of the three residue Trp-Tyr-Met cross-link is important for the catalase, but not the peroxidase activity of the enzyme.

The enzyme catalyses H2O2 + AH2 = A + 2 H2O. It carries out the reaction 2 H2O2 = O2 + 2 H2O. Bifunctional enzyme with both catalase and broad-spectrum peroxidase activity. This Legionella pneumophila subsp. pneumophila (strain Philadelphia 1 / ATCC 33152 / DSM 7513) protein is Catalase-peroxidase 2.